The following is a 333-amino-acid chain: NADH-quinone oxidoreductase subunit H (333 aa).

The next 8 membrane-spanning stretches (helical) occupy residues 8-28, 75-95, 108-128, 154-174, 191-211, 251-271, 273-293, and 312-332; these read VLAAALIALAFVAVNAAYLVW, ILFMVAPVLAMFPALMSFVTI, IGLLVILAFASFAGLAILLAG, MLITAITVVLVSGSVDFIEIV, PGLFNIFMPISFLIFFICSLA, IVIGACLTTLLFLGGWDCPFG, FPGVWWFLIKIYILIFTFIWI, and ILIPLSLINLLLTAGFIKVFA.

The protein belongs to the complex I subunit 1 family. NDH-1 is composed of 14 different subunits. Subunits NuoA, H, J, K, L, M, N constitute the membrane sector of the complex.

It localises to the cell inner membrane. The enzyme catalyses a quinone + NADH + 5 H(+)(in) = a quinol + NAD(+) + 4 H(+)(out). In terms of biological role, NDH-1 shuttles electrons from NADH, via FMN and iron-sulfur (Fe-S) centers, to quinones in the respiratory chain. The immediate electron acceptor for the enzyme in this species is believed to be ubiquinone. Couples the redox reaction to proton translocation (for every two electrons transferred, four hydrogen ions are translocated across the cytoplasmic membrane), and thus conserves the redox energy in a proton gradient. This subunit may bind ubiquinone. The chain is NADH-quinone oxidoreductase subunit H from Desulfotalea psychrophila (strain LSv54 / DSM 12343).